Reading from the N-terminus, the 741-residue chain is Chromosome transmission fidelity protein 18 (741 aa).

183-190 (GPPGIGKT) lines the ATP pocket.

It belongs to the activator 1 small subunits family. CTF18 subfamily. In terms of assembly, component of the CTF18-RFC complex, which consists of CTF18, CTF8, DCC1, RFC2, RFC3, RFC4 and RFC5. CTF18 interacts with ECO1.

The protein resides in the nucleus. Essential for the fidelity of chromosome transmission. Required for the DNA replication block checkpoint. Component of the RFC-like complex CTF18-RFC which is required for efficient establishment of chromosome cohesion during S-phase and may load or unload POL30/PCNA. During a clamp loading circle, the RFC:clamp complex binds to DNA and the recognition of the double-stranded/single-stranded junction stimulates ATP hydrolysis by RFC. The complex presumably provides bipartite ATP sites in which one subunit supplies a catalytic site for hydrolysis of ATP bound to the neighboring subunit. Dissociation of RFC from the clamp leaves the clamp encircling DNA. This is Chromosome transmission fidelity protein 18 (CTF18) from Saccharomyces cerevisiae (strain ATCC 204508 / S288c) (Baker's yeast).